The primary structure comprises 427 residues: Histidine--tRNA ligase (427 aa).

Belongs to the class-II aminoacyl-tRNA synthetase family. As to quaternary structure, homodimer.

It localises to the cytoplasm. The enzyme catalyses tRNA(His) + L-histidine + ATP = L-histidyl-tRNA(His) + AMP + diphosphate + H(+). The protein is Histidine--tRNA ligase (hisS) of Mycobacterium leprae (strain TN).